Consider the following 504-residue polypeptide: MAKAATPKETAAAKKPAAPKKAASAKTVVAATGAVGRVTQVIGAVVDVAFEEGQLPQILNALETDNNGNRLVLEVAQHLGENSVRTIAMDSTEGLVRGQKVADTGGPIAVPVGKETLGRIMNVIGEPVDEAGPLKTSARRAIHQEAPAYVDQSTEAQILVTGIKVVDLLAPYAKGGKIGLFGGAGVGKTVLIMELINNVAKAHGGYSVFAGVGERTREGNDLYHEMIESGVNKHGGGEGSKAALVYGQMNEPPGARARVALTGLTVAEQFRDEGQDVLFFVDNIFRFTQAGSEVSALLGRIPSAVGYQPTLATDMGQMQERITTTTKGSITSVQAIYVPADDLTDPAPATSFAHLDATTVLSRSIAEKGIYPAVDPLDSTSRMLDPMIVGEEHYEVSRKVQSTLQRYKALQDIIAILGMDELSEEDKIAVARARKIERFLSQPFFVAEVFTGSPGKLVALEDTIKGFKGLVNGEYDHLPEAAFYMVGSIEEAVEKAKKLAAEAA.

The disordered stretch occupies residues 1 to 23; the sequence is MAKAATPKETAAAKKPAAPKKAA. 182 to 189 contributes to the ATP binding site; sequence GGAGVGKT.

Belongs to the ATPase alpha/beta chains family. F-type ATPases have 2 components, CF(1) - the catalytic core - and CF(0) - the membrane proton channel. CF(1) has five subunits: alpha(3), beta(3), gamma(1), delta(1), epsilon(1). CF(0) has three main subunits: a(1), b(2) and c(9-12). The alpha and beta chains form an alternating ring which encloses part of the gamma chain. CF(1) is attached to CF(0) by a central stalk formed by the gamma and epsilon chains, while a peripheral stalk is formed by the delta and b chains.

The protein localises to the cell inner membrane. The catalysed reaction is ATP + H2O + 4 H(+)(in) = ADP + phosphate + 5 H(+)(out). Functionally, produces ATP from ADP in the presence of a proton gradient across the membrane. The catalytic sites are hosted primarily by the beta subunits. In Rhizobium meliloti (strain 1021) (Ensifer meliloti), this protein is ATP synthase subunit beta.